The following is a 509-amino-acid chain: Dihydrolipoyl dehydrogenase, mitochondrial (509 aa).

Residues 1-35 constitute a mitochondrion transit peptide; sequence MQSWSRVYCSLAKRGHFNRISHGLQGLSAVPLRTY. Lys-66 carries the post-translational modification N6-acetyllysine; alternate. N6-succinyllysine; alternate is present on Lys-66. FAD is bound by residues 71–80 and Lys-89; that span reads EKNETLGGTC. A disulfide bond links Cys-80 and Cys-85. N6-acetyllysine; alternate is present on residues Lys-104, Lys-122, Lys-132, and Lys-143. Lys-104, Lys-122, Lys-132, and Lys-143 each carry N6-succinyllysine; alternate. An FAD-binding site is contributed by Gly-154. Residues Lys-159 and Lys-166 each carry the N6-succinyllysine modification. 183–185 provides a ligand contact to FAD; the sequence is TGS. Residues 220–227 and Glu-243 contribute to the NAD(+) site; that span reads GAGVIGVE. 2 positions are modified to N6-succinyllysine: Lys-273 and Lys-277. Residue Val-278 participates in NAD(+) binding. Phosphoserine is present on residues Ser-285 and Ser-297. Gly-314 contacts NAD(+). Lys-346 carries the post-translational modification N6-acetyllysine. FAD-binding positions include Asp-355 and 361–364; that span reads MLAH. Lys-410 is subject to N6-acetyllysine; alternate. Lys-410 carries the post-translational modification N6-succinyllysine; alternate. An N6-acetyllysine mark is found at Lys-417 and Lys-420. An N6-succinyllysine modification is found at Lys-430. His-487 serves as the catalytic Proton acceptor. Ser-502 is subject to Phosphoserine. The residue at position 505 (Lys-505) is an N6-acetyllysine; alternate. Lys-505 is modified (N6-succinyllysine; alternate).

The protein belongs to the class-I pyridine nucleotide-disulfide oxidoreductase family. In terms of assembly, homodimer. Part of the multimeric pyruvate dehydrogenase complex that contains multiple copies of pyruvate dehydrogenase (subunits PDHA (PDHA1 or PDHA2) and PDHB, E1), dihydrolipoamide acetyltransferase (DLAT, E2) and lipoamide dehydrogenase (DLD, E3). These subunits are bound to an inner core composed of about 48 DLAT and 12 PDHX molecules (by non covalent bonds). The 2-oxoglutarate dehydrogenase complex is composed of OGDH (2-oxoglutarate dehydrogenase; E1), DLST (dihydrolipoamide succinyltransferase; E2), DLD (dihydrolipoamide dehydrogenase; E3) and the assembly factor KGD4. It contains multiple copies of the three enzymatic components (E1, E2 and E3). In the nucleus, the 2-oxoglutarate dehydrogenase complex associates with KAT2A. Interacts with PDHX. FAD serves as cofactor. In terms of processing, tyrosine phosphorylated.

The protein resides in the mitochondrion matrix. Its subcellular location is the nucleus. It is found in the cell projection. It localises to the cilium. The protein localises to the flagellum. The protein resides in the cytoplasmic vesicle. Its subcellular location is the secretory vesicle. It is found in the acrosome. The catalysed reaction is N(6)-[(R)-dihydrolipoyl]-L-lysyl-[protein] + NAD(+) = N(6)-[(R)-lipoyl]-L-lysyl-[protein] + NADH + H(+). Its function is as follows. Lipoamide dehydrogenase is a component of the glycine cleavage system as well as an E3 component of three alpha-ketoacid dehydrogenase complexes (pyruvate-, alpha-ketoglutarate-, and branched-chain amino acid-dehydrogenase complex). The 2-oxoglutarate dehydrogenase complex is mainly active in the mitochondrion. A fraction of the 2-oxoglutarate dehydrogenase complex also localizes in the nucleus and is required for lysine succinylation of histones: associates with KAT2A on chromatin and provides succinyl-CoA to histone succinyltransferase KAT2A. In monomeric form may have additional moonlighting function as serine protease. Involved in the hyperactivation of spermatazoa during capacitation and in the spermatazoal acrosome reaction. This is Dihydrolipoyl dehydrogenase, mitochondrial (DLD) from Macaca fascicularis (Crab-eating macaque).